The following is a 569-amino-acid chain: MMRFTKFYAPSLKEAPKDASLPSHIFLTRAGFVEQIGSGLYNFLPLGKRVLDKIKNIVKEEMDKAGAQEVNLSFITPASLWQESGRYNVFGKELLRFKDRKENEFVLGPTHEEAMLSLVKNKITSYKQLPLHLYQIGLKFRDEARPRFGLLRCREFLMKDGYSFHANEEDLGREFELMYKTYSQILQRMGLDFRAVEADSGAIGGSGSKEFMVLAKNGEDDILICENCDYAANVEAAKRAKKTCQDERPEANYASKFHTPNIKTIDSLAQFFKINAFYTIKAVVKKAIYENESKLVVFFIRGSDDLQEVKAQNACSALELVDASEEELEKAGLVAGFIGFVGLKDIDFYIDFELENEKQMIMGANEKDYHLIGIDVVNLNKDRFKDLIEVKEGDCCVKCGAKLKQSKGIEVGHIFKLGQKYSKAMNANFLDENGKSQPFYMGCYGIGVSRLLAVATEASHDEKGCIWNKTLAPFVLEIIVSNLKDEKALEFANKLYEDLTNLGLEVLLDDRNERFGVKMNDFELMGFPYALVVGKGLEKNEIELIQREGLIKELIKTDELMEILKKKVL.

The protein belongs to the class-II aminoacyl-tRNA synthetase family. ProS type 1 subfamily. Homodimer.

The protein localises to the cytoplasm. It carries out the reaction tRNA(Pro) + L-proline + ATP = L-prolyl-tRNA(Pro) + AMP + diphosphate. Functionally, catalyzes the attachment of proline to tRNA(Pro) in a two-step reaction: proline is first activated by ATP to form Pro-AMP and then transferred to the acceptor end of tRNA(Pro). As ProRS can inadvertently accommodate and process non-cognate amino acids such as alanine and cysteine, to avoid such errors it has two additional distinct editing activities against alanine. One activity is designated as 'pretransfer' editing and involves the tRNA(Pro)-independent hydrolysis of activated Ala-AMP. The other activity is designated 'posttransfer' editing and involves deacylation of mischarged Ala-tRNA(Pro). The misacylated Cys-tRNA(Pro) is not edited by ProRS. The protein is Proline--tRNA ligase of Campylobacter jejuni (strain RM1221).